We begin with the raw amino-acid sequence, 164 residues long: CB1 cannabinoid receptor-interacting protein 1 (164 aa).

This sequence belongs to the CNRIP family. As to quaternary structure, interacts with the cannabinoid receptor CNR1 (via C-terminus). Does not interact with cannabinoid receptor CNR2. Highly expressed in brain. Also detected in heart, lung, intestine, kidney, testis, spleen, liver and muscle (at protein level).

Its function is as follows. Suppresses cannabinoid receptor CNR1-mediated tonic inhibition of voltage-gated calcium channels. This chain is CB1 cannabinoid receptor-interacting protein 1 (Cnrip1), found in Mus musculus (Mouse).